We begin with the raw amino-acid sequence, 248 residues long: Pulmonary surfactant-associated protein A (248 aa).

The first 17 residues, Met-1–Gly-17, serve as a signal peptide directing secretion. An N-linked (GlcNAc...) asparagine glycan is attached at Asn-20. Residues Gly-28–Pro-100 enclose the Collagen-like domain. The tract at residues Asn-29–Leu-103 is disordered. Residues Pro-30, Pro-33, Pro-36, Pro-42, Pro-54, Pro-57, Pro-63, Pro-67, and Pro-70 each carry the 4-hydroxyproline modification. The span at Pro-42 to Lys-51 shows a compositional bias: basic and acidic residues. Over residues Pro-54–Gly-65 the composition is skewed to pro residues. Positions Glu-84–Glu-93 are enriched in basic and acidic residues. The 117-residue stretch at Leu-132–Phe-248 folds into the C-type lectin domain. Disulfide bonds link Cys-155–Cys-246 and Cys-224–Cys-238. Asn-207 is a glycosylation site (N-linked (GlcNAc...) asparagine). Glu-215, Arg-217, and Asn-234 together coordinate Ca(2+).

This sequence belongs to the SFTPA family. In terms of assembly, oligomeric complex of 6 set of homotrimers.

The protein resides in the secreted. It localises to the extracellular space. The protein localises to the extracellular matrix. It is found in the surface film. Functionally, in presence of calcium ions, it binds to surfactant phospholipids and contributes to lower the surface tension at the air-liquid interface in the alveoli of the mammalian lung and is essential for normal respiration. Enhances the expression of MYO18A/SP-R210 on alveolar macrophages. The protein is Pulmonary surfactant-associated protein A (SFTPA1) of Canis lupus familiaris (Dog).